Here is a 194-residue protein sequence, read N- to C-terminus: ATP-dependent Clp protease proteolytic subunit (194 aa).

The Nucleophile role is filled by Ser-98. Residue His-123 is part of the active site.

It belongs to the peptidase S14 family. As to quaternary structure, fourteen ClpP subunits assemble into 2 heptameric rings which stack back to back to give a disk-like structure with a central cavity, resembling the structure of eukaryotic proteasomes.

It localises to the cytoplasm. It catalyses the reaction Hydrolysis of proteins to small peptides in the presence of ATP and magnesium. alpha-casein is the usual test substrate. In the absence of ATP, only oligopeptides shorter than five residues are hydrolyzed (such as succinyl-Leu-Tyr-|-NHMec, and Leu-Tyr-Leu-|-Tyr-Trp, in which cleavage of the -Tyr-|-Leu- and -Tyr-|-Trp bonds also occurs).. Functionally, cleaves peptides in various proteins in a process that requires ATP hydrolysis. Has a chymotrypsin-like activity. Plays a major role in the degradation of misfolded proteins. The protein is ATP-dependent Clp protease proteolytic subunit of Aliarcobacter butzleri (strain RM4018) (Arcobacter butzleri).